Consider the following 134-residue polypeptide: uncharacterized protein (134 aa).

Transmembrane regions (helical) follow at residues 49-69 (VAVP…SLDV) and 71-91 (LSMT…LNKV).

It localises to the cell membrane. This is an uncharacterized protein from Mycobacterium tuberculosis (strain ATCC 25618 / H37Rv).